The chain runs to 463 residues: Putative dipeptidase YtjP (463 aa).

Histidine 85 serves as a coordination point for Zn(2+). Aspartate 87 is a catalytic residue. Aspartate 116 provides a ligand contact to Zn(2+). Catalysis depends on glutamate 150, which acts as the Proton acceptor. Residues glutamate 151, aspartate 174, and histidine 436 each contribute to the Zn(2+) site.

This sequence belongs to the peptidase M20A family. Zn(2+) serves as cofactor.

The protein is Putative dipeptidase YtjP (ytjP) of Bacillus subtilis (strain 168).